The following is a 468-amino-acid chain: Glutamate--tRNA ligase (468 aa).

The short motif at P9–G19 is the 'HIGH' region element. The Zn(2+) site is built by C98, C100, C125, and D127. The short motif at K235 to R239 is the 'KMSKS' region element. K238 is a binding site for ATP.

Belongs to the class-I aminoacyl-tRNA synthetase family. Glutamate--tRNA ligase type 1 subfamily. Monomer. It depends on Zn(2+) as a cofactor.

It localises to the cytoplasm. It catalyses the reaction tRNA(Glu) + L-glutamate + ATP = L-glutamyl-tRNA(Glu) + AMP + diphosphate. Functionally, catalyzes the attachment of glutamate to tRNA(Glu) in a two-step reaction: glutamate is first activated by ATP to form Glu-AMP and then transferred to the acceptor end of tRNA(Glu). In Idiomarina loihiensis (strain ATCC BAA-735 / DSM 15497 / L2-TR), this protein is Glutamate--tRNA ligase.